A 342-amino-acid polypeptide reads, in one-letter code: Ribosomal RNA small subunit methyltransferase C (342 aa).

This sequence belongs to the methyltransferase superfamily. RsmC family. Monomer.

The protein resides in the cytoplasm. The catalysed reaction is guanosine(1207) in 16S rRNA + S-adenosyl-L-methionine = N(2)-methylguanosine(1207) in 16S rRNA + S-adenosyl-L-homocysteine + H(+). In terms of biological role, specifically methylates the guanine in position 1207 of 16S rRNA in the 30S particle. The protein is Ribosomal RNA small subunit methyltransferase C of Salmonella typhi.